We begin with the raw amino-acid sequence, 146 residues long: MKIYVDADACPVKDVIIFEATKAEIPVTLVTSFSHYSNAEQPKGVETIYVDSGADAADYRIMQLAQKEDLIVTQDYGLASLALAKGCIVLHHKGYKYTNENIEQLLQTRYLSAMVRKSGKRTKGPKPFTAEDKEKFRALFKSMIAL.

The protein belongs to the UPF0178 family.

In Bacillus cereus (strain AH820), this protein is UPF0178 protein BCAH820_3075.